We begin with the raw amino-acid sequence, 630 residues long: Cyclin-T1-2 (630 aa).

Residues Gln-288–Ser-297 show a composition bias toward low complexity. Disordered stretches follow at residues Gln-288–Gln-313 and Arg-410–Pro-439. Polar residues predominate over residues Gly-421–Pro-439.

This sequence belongs to the cyclin family. Cyclin T subfamily.

This is Cyclin-T1-2 (CYCT1_2) from Oryza sativa subsp. japonica (Rice).